We begin with the raw amino-acid sequence, 112 residues long: MYB-like transcription factor ETC2 (112 aa).

The region spanning 41–78 is the Myb-like domain; that stretch reads TEQEEDLISRMYRLVGNRWDLIAGRVVGRKANEIERYW.

In terms of assembly, interacts with GL3. Expressed in stomatal guard mother cells, young stomata and trichomes of young leaves, and inflorescences.

The protein resides in the nucleus. In terms of biological role, MYB-type transcription factor involved in epidermal cell fate specification. Acts as a negative regulator of trichome development, by mediating lateral inhibition. Promotes the formation of hair developing cells in H position in root epidermis, probably by inhibiting non-hair cell formation. The polypeptide is MYB-like transcription factor ETC2 (ETC2) (Arabidopsis thaliana (Mouse-ear cress)).